We begin with the raw amino-acid sequence, 358 residues long: tRNA-specific 2-thiouridylase MnmA (358 aa).

ATP is bound by residues 7 to 14 (AMSGGVDS) and Leu-33. Catalysis depends on Cys-101, which acts as the Nucleophile. Residues Cys-101 and Cys-197 are joined by a disulfide bond. Position 125 (Gly-125) interacts with ATP. Residues 147–149 (KDQ) are interaction with tRNA. The Cysteine persulfide intermediate role is filled by Cys-197.

Belongs to the MnmA/TRMU family.

It is found in the cytoplasm. The enzyme catalyses S-sulfanyl-L-cysteinyl-[protein] + uridine(34) in tRNA + AH2 + ATP = 2-thiouridine(34) in tRNA + L-cysteinyl-[protein] + A + AMP + diphosphate + H(+). Functionally, catalyzes the 2-thiolation of uridine at the wobble position (U34) of tRNA, leading to the formation of s(2)U34. This is tRNA-specific 2-thiouridylase MnmA from Rickettsia typhi (strain ATCC VR-144 / Wilmington).